The sequence spans 242 residues: Phosphoribosylaminoimidazole-succinocarboxamide synthase (242 aa).

It belongs to the SAICAR synthetase family.

It catalyses the reaction 5-amino-1-(5-phospho-D-ribosyl)imidazole-4-carboxylate + L-aspartate + ATP = (2S)-2-[5-amino-1-(5-phospho-beta-D-ribosyl)imidazole-4-carboxamido]succinate + ADP + phosphate + 2 H(+). It functions in the pathway purine metabolism; IMP biosynthesis via de novo pathway; 5-amino-1-(5-phospho-D-ribosyl)imidazole-4-carboxamide from 5-amino-1-(5-phospho-D-ribosyl)imidazole-4-carboxylate: step 1/2. This Ehrlichia chaffeensis (strain ATCC CRL-10679 / Arkansas) protein is Phosphoribosylaminoimidazole-succinocarboxamide synthase.